A 978-amino-acid polypeptide reads, in one-letter code: Receptor like protein 21 (978 aa).

Positions 1–27 are cleaved as a signal peptide; that stretch reads MLLAMEGKLFLCQYLIWVMLLLGQLHG. Residues 28-930 are Extracellular-facing; that stretch reads CTSCIEKERE…EEDDKAAIDM (903 aa). N-linked (GlcNAc...) asparagine glycans are attached at residues N64, N79, N102, N116, and N155. 28 LRR repeats span residues 141–167, 169–189, 190–213, 214–237, 238–262, 264–287, 288–310, 312–335, 337–361, 362–385, 386–409, 410–432, 433–455, 457–480, 481–504, 506–529, 530–553, 554–577, 579–601, 602–625, 627–646, 647–671, 673–693, 694–716, 788–811, 812–835, 837–859, and 860–885; these read LRNL…AATS, TTLI…GLKD, LTNL…LIHL, KKLK…ELQN, LINL…VFCK, KNLR…LGSL, KKLR…SFSS, ESLE…PLTN, TNLK…TWQP, NFQL…LLYQ, KKLR…LLTN, NPEL…PTMV, HNLQ…MDHA, PNLV…IGEM, KNIS…FVTG, VSIM…ETNF, PSLD…LSNS, TMLR…LFEF, YLDY…LLGM, PFLS…VDSE, GIYM…DTLL, KSVQ…DTQS, NILL…LCDL, SNVR…CLSN, LRLM…ELGD, LLKL…SFSK, IDVE…LLSS, and LTSL…QFNT. A glycan (N-linked (GlcNAc...) asparagine) is linked at N204. N-linked (GlcNAc...) asparagine glycosylation occurs at N335. 2 N-linked (GlcNAc...) asparagine glycosylation sites follow: N397 and N420. 3 N-linked (GlcNAc...) asparagine glycosylation sites follow: N463, N482, and N492. The N-linked (GlcNAc...) asparagine glycan is linked to N552. Residue N636 is glycosylated (N-linked (GlcNAc...) asparagine). N681 and N716 each carry an N-linked (GlcNAc...) asparagine glycan. N-linked (GlcNAc...) asparagine glycosylation occurs at N819. Residue N872 is glycosylated (N-linked (GlcNAc...) asparagine). Residues 902–922 form a disordered region; that stretch reads TSRSCETNKSPEEADNGQEEE. Residues 931 to 951 form a helical membrane-spanning segment; sequence MVFYFSTASIYVTALIGVLVL. Residues 952 to 978 lie on the Cytoplasmic side of the membrane; sequence MCFDCPWRRAWLRIVDAFIASAKHVLP.

It belongs to the RLP family.

It localises to the cell membrane. The protein is Receptor like protein 21 of Arabidopsis thaliana (Mouse-ear cress).